The chain runs to 367 residues: 3-isopropylmalate dehydrogenase (367 aa).

Residue 75–88 (GPKWDGIERSKRPE) participates in NAD(+) binding. Substrate-binding residues include R95, R105, R133, and D230. 3 residues coordinate Mg(2+): D230, D254, and D258. Residue 288 to 300 (GSAPDIAGQDIAN) coordinates NAD(+).

The protein belongs to the isocitrate and isopropylmalate dehydrogenases family. LeuB type 1 subfamily. Homodimer. It depends on Mg(2+) as a cofactor. Mn(2+) serves as cofactor.

It is found in the cytoplasm. The enzyme catalyses (2R,3S)-3-isopropylmalate + NAD(+) = 4-methyl-2-oxopentanoate + CO2 + NADH. Its pathway is amino-acid biosynthesis; L-leucine biosynthesis; L-leucine from 3-methyl-2-oxobutanoate: step 3/4. In terms of biological role, catalyzes the oxidation of 3-carboxy-2-hydroxy-4-methylpentanoate (3-isopropylmalate) to 3-carboxy-4-methyl-2-oxopentanoate. The product decarboxylates to 4-methyl-2 oxopentanoate. This is 3-isopropylmalate dehydrogenase from Psychrobacter arcticus (strain DSM 17307 / VKM B-2377 / 273-4).